Consider the following 75-residue polypeptide: Small ribosomal subunit protein bS18 (75 aa).

Belongs to the bacterial ribosomal protein bS18 family. Part of the 30S ribosomal subunit. Forms a tight heterodimer with protein bS6.

Binds as a heterodimer with protein bS6 to the central domain of the 16S rRNA, where it helps stabilize the platform of the 30S subunit. The sequence is that of Small ribosomal subunit protein bS18 from Buchnera aphidicola subsp. Baizongia pistaciae (strain Bp).